The primary structure comprises 344 residues: Dimethyladenosine transferase 1, mitochondrial (344 aa).

The transit peptide at 1–27 (MATPGALAKFRLPPLPTIGEIVKLFNL) directs the protein to the mitochondrion. The S-adenosyl-L-methionine site is built by asparagine 36, leucine 38, glycine 63, glutamate 85, lysine 86, aspartate 111, isoleucine 112, and asparagine 141.

This sequence belongs to the class I-like SAM-binding methyltransferase superfamily. rRNA adenine N(6)-methyltransferase family. KsgA subfamily.

It localises to the mitochondrion. It carries out the reaction adenosine(N)/adenosine(N+1) in rRNA + 4 S-adenosyl-L-methionine = N(6)-dimethyladenosine(N)/N(6)-dimethyladenosine(N+1) in rRNA + 4 S-adenosyl-L-homocysteine + 4 H(+). Its function is as follows. Mitochondrial methyltransferase which uses S-adenosyl methionine to dimethylate two highly conserved adjacent adenosine residues (A1583 and A1584) within the loop of helix 45 at the 3-prime end of 12S rRNA, thereby regulating the assembly or stability of the small subunit of the mitochondrial ribosome. Also required for basal transcription of mitochondrial DNA, probably via its interaction with POLRMT and TFAM. Stimulates transcription independently of the methyltransferase activity. The sequence is that of Dimethyladenosine transferase 1, mitochondrial (tfb1m.L) from Xenopus laevis (African clawed frog).